The following is a 331-amino-acid chain: MTVAVFLAILCLRAALAAPRPDYSLDAEWEEWKRNNAKTYSPEEEKQRRAVWEENVKMIKWHTMQNGLWMNNFTIEMNEFGDMTGEEMRMMTDSSALTLRNGKHIQKRNVKIPKTLDWRDTGCVAPVRSQGGCGACWAFSVAASIESQLFKKTGKLIPLSVQNLIDCTVTYGNNDCSGGKPYTAFQYVKNNGGLEAEATYPYEAKLRHCRYRPERSVVKIARFFVVPRNEEALMQALVTYGPIAVAIDGSHASFKRYRGGIYHEPKCRRDTLDHGLLLVGYGYEGHESENRKYWLLKNSHGEQWGERGYMKLPRDQNNYCGIASYAMYPLL.

The signal sequence occupies residues 1–17 (MTVAVFLAILCLRAALA). A propeptide spans 18-111 (APRPDYSLDA…GKHIQKRNVK (94 aa)) (activation peptide). A Nuclear localization signal motif is present at residues 33–50 (KRNNAKTYSPEEEKQRRA). Asn-72 carries an N-linked (GlcNAc...) asparagine glycan. 3 disulfides stabilise this stretch: Cys-133/Cys-176, Cys-167/Cys-209, and Cys-267/Cys-320. Cys-136 is an active-site residue. Residues His-274 and Asn-298 contribute to the active site.

Belongs to the peptidase C1 family.

It localises to the endosome. It is found in the lysosome. Its subcellular location is the cytoplasm. The protein localises to the perinuclear region. The protein resides in the golgi apparatus. It localises to the nucleus. It is found in the secreted. Its subcellular location is the extracellular space. In terms of biological role, involved in trophoblast cell proliferation and differentiation probably by affecting mitotic cell cycle progression. Proteolytic activity and nuclear localization are essential for its role in cell cycle progression. The protein is Cathepsin 7 (Cts7) of Rattus norvegicus (Rat).